Reading from the N-terminus, the 130-residue chain is Small ribosomal subunit protein uS8 (130 aa).

This sequence belongs to the universal ribosomal protein uS8 family. As to quaternary structure, part of the 30S ribosomal subunit.

Its function is as follows. One of the primary rRNA binding proteins, it binds directly to 16S rRNA central domain where it helps coordinate assembly of the platform of the 30S subunit. The polypeptide is Small ribosomal subunit protein uS8 (Thermococcus kodakarensis (strain ATCC BAA-918 / JCM 12380 / KOD1) (Pyrococcus kodakaraensis (strain KOD1))).